The following is a 372-amino-acid chain: Flagellar P-ring protein (372 aa).

The signal sequence occupies residues 1–29 (MPARPIPVPAFALALALAAALAVPAPAAA).

It belongs to the FlgI family. The basal body constitutes a major portion of the flagellar organelle and consists of four rings (L,P,S, and M) mounted on a central rod.

Its subcellular location is the periplasm. It localises to the bacterial flagellum basal body. Its function is as follows. Assembles around the rod to form the L-ring and probably protects the motor/basal body from shearing forces during rotation. The protein is Flagellar P-ring protein of Anaeromyxobacter dehalogenans (strain 2CP-1 / ATCC BAA-258).